A 317-amino-acid chain; its full sequence is Protoheme IX farnesyltransferase (317 aa).

9 consecutive transmembrane segments (helical) span residues 43–63, 65–85, 119–139, 140–160, 168–188, 195–215, 238–258, 261–281, and 292–312; these read PISV…AGAT, PVSG…CAGA, ALYW…NLNP, IAWI…SLWL, IVIG…AVTG, VLIA…LAIF, LNWL…IYFV, WGLV…ALSV, and AWVL…SMMV.

It belongs to the UbiA prenyltransferase family. Protoheme IX farnesyltransferase subfamily. In terms of assembly, interacts with CtaA.

It localises to the cell membrane. The catalysed reaction is heme b + (2E,6E)-farnesyl diphosphate + H2O = Fe(II)-heme o + diphosphate. It participates in porphyrin-containing compound metabolism; heme O biosynthesis; heme O from protoheme: step 1/1. Converts heme B (protoheme IX) to heme O by substitution of the vinyl group on carbon 2 of heme B porphyrin ring with a hydroxyethyl farnesyl side group. The chain is Protoheme IX farnesyltransferase from Desulforudis audaxviator (strain MP104C).